A 372-amino-acid polypeptide reads, in one-letter code: 3-dehydroquinate synthase (372 aa).

NAD(+)-binding positions include 113 to 117 (GVIGD), 137 to 138 (TS), Lys-150, Lys-159, and 177 to 180 (TLKT). 3 residues coordinate Zn(2+): Glu-192, His-257, and His-274.

The protein belongs to the sugar phosphate cyclases superfamily. Dehydroquinate synthase family. It depends on Co(2+) as a cofactor. The cofactor is Zn(2+). NAD(+) serves as cofactor.

The protein localises to the cytoplasm. The enzyme catalyses 7-phospho-2-dehydro-3-deoxy-D-arabino-heptonate = 3-dehydroquinate + phosphate. It functions in the pathway metabolic intermediate biosynthesis; chorismate biosynthesis; chorismate from D-erythrose 4-phosphate and phosphoenolpyruvate: step 2/7. Its function is as follows. Catalyzes the conversion of 3-deoxy-D-arabino-heptulosonate 7-phosphate (DAHP) to dehydroquinate (DHQ). The polypeptide is 3-dehydroquinate synthase (Acaryochloris marina (strain MBIC 11017)).